Here is a 496-residue protein sequence, read N- to C-terminus: Autophagy-related protein 21 (496 aa).

The interval 41–86 is disordered; it reads SKKKTSNNNGSASNSESRNNEESILITNGSRDRTDAEEEEDNEDNA. Residues 46 to 57 show a composition bias toward low complexity; the sequence is SNNNGSASNSES. Positions 75-84 are enriched in acidic residues; sequence DAEEEEDNED. At Thr-213 the chain carries Phosphothreonine. Ser-237 bears the Phosphoserine mark. 3 WD repeats span residues 294–334, 346–385, and 448–488; these read VHKG…DYMS, TRLC…NSLP, and VNES…GECV. The L/FRRG motif motif lies at 342–346; it reads FRRGT.

It belongs to the WD repeat PROPPIN family.

It localises to the cytoplasm. It is found in the vacuole. Functionally, required for cytoplasm to vacuole transport (Cvt) vesicles formation and mitophagy. Involved in binding of phosphatidylethanolamine to ATG8 and in recruitment of ATG8 and ATG5 to the pre-autophagosomal structure. Protects ATG8 from ARG4-mediated cleavage. Essential for maturation of proaminopeptidase I. The sequence is that of Autophagy-related protein 21 (ATG21) from Saccharomyces cerevisiae (strain ATCC 204508 / S288c) (Baker's yeast).